We begin with the raw amino-acid sequence, 475 residues long: Putative aldehyde dehydrogenase SERP1729 (475 aa).

201–207 (GDGSGVG) provides a ligand contact to NAD(+). Active-site residues include Glu245 and Cys279.

It belongs to the aldehyde dehydrogenase family.

The catalysed reaction is an aldehyde + NAD(+) + H2O = a carboxylate + NADH + 2 H(+). The protein is Putative aldehyde dehydrogenase SERP1729 of Staphylococcus epidermidis (strain ATCC 35984 / DSM 28319 / BCRC 17069 / CCUG 31568 / BM 3577 / RP62A).